Here is a 294-residue protein sequence, read N- to C-terminus: Probable endonuclease 4 (294 aa).

Zn(2+) is bound by residues His71, His111, Glu148, Asp182, His185, His217, Asp230, His232, and Glu262.

It belongs to the AP endonuclease 2 family. The cofactor is Zn(2+).

The catalysed reaction is Endonucleolytic cleavage to 5'-phosphooligonucleotide end-products.. Endonuclease IV plays a role in DNA repair. It cleaves phosphodiester bonds at apurinic or apyrimidinic (AP) sites, generating a 3'-hydroxyl group and a 5'-terminal sugar phosphate. The protein is Probable endonuclease 4 of Acholeplasma laidlawii (strain PG-8A).